Reading from the N-terminus, the 711-residue chain is Ribosomal RNA large subunit methyltransferase K/L (711 aa).

A THUMP domain is found at 43 to 154 (TLYRTLLWSR…RENLVISLDL (112 aa)).

The protein belongs to the methyltransferase superfamily. RlmKL family.

It is found in the cytoplasm. The catalysed reaction is guanosine(2445) in 23S rRNA + S-adenosyl-L-methionine = N(2)-methylguanosine(2445) in 23S rRNA + S-adenosyl-L-homocysteine + H(+). It catalyses the reaction guanosine(2069) in 23S rRNA + S-adenosyl-L-methionine = N(2)-methylguanosine(2069) in 23S rRNA + S-adenosyl-L-homocysteine + H(+). In terms of biological role, specifically methylates the guanine in position 2445 (m2G2445) and the guanine in position 2069 (m7G2069) of 23S rRNA. The protein is Ribosomal RNA large subunit methyltransferase K/L of Haemophilus influenzae (strain PittGG).